Consider the following 504-residue polypeptide: MGTSIKANVLALFLFYLLSPTVFSVSDDGLIRIGLKKRKVDRIDQLRGRRALMEGNARKDFGFRGTVRDSGSAVVALTNDRDTSYFGEIGIGTPPQKFTVIFDTGSSVLWVPSSKCINSKACRAHSMYESSDSSTYKENGTFGAIIYGTGSITGFFSQDSVTIGDLVVKEQDFIEATDEADNVFLHRLFDGILGLSFQTISVPVWYNMLNQGLVKERRFSFWLNRNVDEEEGGELVFGGLDPNHFRGDHTYVPVTYQYYWQFGIGDVLIGDKSTGFCAPGCQAFADSGTSLLSGPTAIVTQINHAIGANGVMNQQCKTVVSRYGRDIIEMLRSKIQPDKICSHMKLCTFDGARDVSSIIESVVDKNNDKSSGGIHDEMCTFCEMAVVWMQNEIKQSETEDNIINYANELCEHLSTSSEELQVDCNTLSSMPNVSFTIGGKKFGLTPEQYILKVGKGEATQCISGFTAMDATLLGPLWILGDVFMRPYHTVFDYGNLLVGFAEAA.

A signal peptide spans 1-24 (MGTSIKANVLALFLFYLLSPTVFS). The propeptide occupies 25–68 (VSDDGLIRIGLKKRKVDRIDQLRGRRALMEGNARKDFGFRGTVR). A Peptidase A1 domain is found at 85–501 (YFGEIGIGTP…DYGNLLVGFA (417 aa)). The active site involves D103. A disulfide bridge connects residues C116 and C122. An N-linked (GlcNAc...) asparagine glycan is attached at N139. The RGD motif motif lies at 246–248 (RGD). A disulfide bridge connects residues C277 and C281. Residue D286 is part of the active site. Positions 310 to 414 (GVMNQQCKTV…YANELCEHLS (105 aa)) are cleaved as a propeptide — plant-specific insert. Residues 311–416 (VMNQQCKTVV…NELCEHLSTS (106 aa)) form the Saposin B-type domain. Disulfide bonds link C316/C410, C341/C382, C347/C379, and C424/C461. The N-linked (GlcNAc...) asparagine glycan is linked to N432. Positions 455–457 (KGE) match the KGE motif motif.

It belongs to the peptidase A1 family. Heterodimer of a light chain and a heavy chain. An intermediate form (35 kDa and 30 kDa subunits) is produced first, and undergoes proteolytic processing to remove the internal plant-specific insert (PSI) and the propeptide. There is some heterogeniety at the cleavage site. Interacts (via RGD or KGE motifs) with PLD1 (via C2 domain). Post-translationally, N-glycosylated. Glycans found at Asn-139 include approximately 6% oligomannose, 82% oligosaccharides of the plant modified type with proximal fucose but without xylose and 6% oligosaccharides of the plant modified type with proximal fucose and xylose. Glycans found at Asn-432 include 14% oligosaccharides of the plant modified type with proximal fucose but without xylose and 86% oligosaccharides of the plant modified type with proximal fucose and xylose. Detected only in pistils, not in seeds, roots, midribs, bracts, stamens, pollen, vascular or supporting tissues. Detected in seeds. High amounts are detected in the broad outer region of the upper portion of the stigma, towards the lower portion of the stigma it accumulates at the periphery. Within the stigma, expressed mainly in the epidermic papillae, lower levels are found in the cortical parenchyma. Present mainly in epidermal cells within the stye (at protein level). Expressed in young flower buds, and at lower levels in seeds, pollen and bracteas, but not in roots or leaves.

Its subcellular location is the microsome membrane. The protein localises to the protein storage vacuole. The protein resides in the secreted. It is found in the cell wall. It localises to the extracellular space. Its subcellular location is the extracellular matrix. With respect to regulation, inhibited by the specific aspartic proteinase inhibitors diazoacetyl-noleucine methyl ester and pepstatin. In terms of biological role, aspartic proteinase with a high preference for bonds between hydrophobic residues. Cleaves alpha-lactalbumin but not beta-lactoglobulin. This Cynara cardunculus (Cardoon) protein is Procardosin-A.